Reading from the N-terminus, the 345-residue chain is Trace amine-associated receptor 6 (345 aa).

Residues 1–32 (MGSNSSPPTVLQLCYENVTGSCVKTPYSPGSR) lie on the Extracellular side of the membrane. Asn-17 carries N-linked (GlcNAc...) asparagine glycosylation. Intrachain disulfides connect Cys-22–Cys-186 and Cys-105–Cys-190. A helical membrane pass occupies residues 33-53 (VILYAVFGFGAVLAVFGNLMV). The Cytoplasmic portion of the chain corresponds to 54–68 (MISILHFKQLHSPTN). A helical membrane pass occupies residues 69 to 89 (FLIASLACADFGVGISVMPFS). The Extracellular segment spans residues 90–107 (MVRSIESCWYFGRSFCTF). Residues 108–128 (HTCCDVAFCYSSLFHLSFISI) form a helical membrane-spanning segment. Topologically, residues 129 to 147 (DRYIAVTDPLVYPTKFTVS) are cytoplasmic. The helical transmembrane segment at 148-168 (VSGICIGVSWILPLVYSGAVF) threads the bilayer. Residues 169–202 (YTGVYDDGLEELSSALNCVGGCQVVVNQNWVLID) are Extracellular-facing. Residues 174-187 (DDGLEELSSALNCV) form an extracellular Loop 2 (ECL2) region. Residues 203–223 (FLSFLIPTLVMIILYGNIFLV) form a helical membrane-spanning segment. The Cytoplasmic segment spans residues 224–259 (ARQQAKKIENIGSKTESSSESYKARVARRERKAAKT). The helical transmembrane segment at 260–276 (LGITVVAFMISWLPYSI) threads the bilayer. The Extracellular segment spans residues 277–282 (DSLVDA). A helical transmembrane segment spans residues 283–302 (FMGFITPAYIYEICVWCAYY). Residues 303 to 345 (NSAMNPLIYALFYPWFKKAIKVIMSGQVFKNSSATMNLFSEQI) lie on the Cytoplasmic side of the membrane.

It belongs to the G-protein coupled receptor 1 family. In terms of tissue distribution, specifically expressed in neurons of the olfactory epithelium, to discrete glomeruli predominantly localized to a confined bulb region. Present in a ventral area of the main olfactory epithelium.

It localises to the cell membrane. In terms of biological role, olfactory receptor specific for trace amines, such as beta-phenylethylamine (beta-PEA). Trace amine compounds are enriched in animal body fluids and act on trace amine-associated receptors (TAARs) to elicit both intraspecific and interspecific innate behaviors. Beta-PEA-binding causes a conformation change that triggers signaling via G(s)-class of G alpha proteins (GNAL or GNAS). The chain is Trace amine-associated receptor 6 from Mus musculus (Mouse).